Reading from the N-terminus, the 706-residue chain is Zinc finger CCCH domain-containing protein 56 (706 aa).

ANK repeat units lie at residues 83–113 (EQRTPLMVASLYGSLDVVKFILSFPEAELNL) and 118–150 (DKSTALHCAASGASVNSLDVVKLLLSVGADPNI). The segment covering 211 to 221 (SSLLSLDSVSS) has biased composition (low complexity). The tract at residues 211–235 (SSLLSLDSVSSPTKPHGTDVTFASE) is disordered. C3H1-type zinc fingers lie at residues 302–324 (PCPDFKKGSCKQGDMCEYAHGVF) and 332–356 (QYRTRLCKDGMGCNRRVCFFAHANE). 3 disordered regions span residues 396-427 (PSAAQHSFTPPISPSGNGSMPHSSMGWPQQNI), 545-616 (SPKN…QTHG), and 652-692 (QMLK…TRES). 2 stretches are compositionally biased toward polar residues: residues 397-427 (SAAQHSFTPPISPSGNGSMPHSSMGWPQQNI) and 545-560 (SPKNVEQHSLLQQASS). Residue S568 is modified to Phosphoserine. Residues 580–592 (SRSLSSRDFGSSL) show a composition bias toward low complexity. Composition is skewed to polar residues over residues 600 to 616 (DSGSPLSPWSSWDQTHG), 652 to 667 (QMLKDSSSPRNGNRVV), and 677 to 686 (QGGSSVNPHN).

In Arabidopsis thaliana (Mouse-ear cress), this protein is Zinc finger CCCH domain-containing protein 56.